We begin with the raw amino-acid sequence, 557 residues long: Probable protein kinase UbiB (557 aa).

The 389-residue stretch at 121–509 folds into the Protein kinase domain; the sequence is AFDTTPLASA…RKLQTRVVTA (389 aa). Residues 127 to 135 and Lys154 each bind ATP; that span reads LASASIAQV. Asp289 (proton acceptor) is an active-site residue. Helical transmembrane passes span 506–526 and 535–555; these read VVTAITGSGLLVVAAVLYGLH and VPVWSWISGGAGSAALLIAWL.

Belongs to the ABC1 family. UbiB subfamily.

It localises to the cell inner membrane. Its pathway is cofactor biosynthesis; ubiquinone biosynthesis [regulation]. Functionally, is probably a protein kinase regulator of UbiI activity which is involved in aerobic coenzyme Q (ubiquinone) biosynthesis. This chain is Probable protein kinase UbiB, found in Xanthomonas campestris pv. campestris (strain 8004).